The following is a 142-amino-acid chain: Natriuretic peptides A (142 aa).

Positions 1–23 (MMLKTVIYTGVLFLICNKVLVRA) are cleaved as a signal peptide. Positions 24-112 (DPLYSPYSSK…RLRDLLMAPR (89 aa)) are excised as a propeptide. The segment at 47–123 (DTLGQDEGND…NRGSSGCFGS (77 aa)) is disordered. Residues 77-94 (WDRERERQWPASDYKKPQ) show a composition bias toward basic and acidic residues. Residues Cys-120 and Cys-136 are joined by a disulfide bond.

Belongs to the natriuretic peptide family. Post-translationally, cleaved upon secretion to produce the functional hormone. Expressed in heart atrium and to a lower extent in heart ventricle, but not in brain.

It is found in the secreted. Functionally, hormone playing a key role in cardiovascular homeostasis through regulation of natriuresis, diuresis, and vasodilation. Has a cGMP-stimulating activity. This chain is Natriuretic peptides A (nppa), found in Acipenser transmontanus (White sturgeon).